A 435-amino-acid chain; its full sequence is U-box domain-containing protein 36 (435 aa).

Positions 227–345 form a coiled coil; it reads EAEASKRKAR…LKGKREEEEA (119 aa). The U-box domain occupies 352-426; the sequence is EPPQYFICPI…QEWLQLRELL (75 aa).

It carries out the reaction S-ubiquitinyl-[E2 ubiquitin-conjugating enzyme]-L-cysteine + [acceptor protein]-L-lysine = [E2 ubiquitin-conjugating enzyme]-L-cysteine + N(6)-ubiquitinyl-[acceptor protein]-L-lysine.. It participates in protein modification; protein ubiquitination. Functions as an E3 ubiquitin ligase. The sequence is that of U-box domain-containing protein 36 (PUB36) from Arabidopsis thaliana (Mouse-ear cress).